The chain runs to 303 residues: Acetylglutamate kinase (303 aa).

Residues 69–70 (GG), Arg91, and Asn201 each bind substrate.

This sequence belongs to the acetylglutamate kinase family. ArgB subfamily.

The protein resides in the cytoplasm. The catalysed reaction is N-acetyl-L-glutamate + ATP = N-acetyl-L-glutamyl 5-phosphate + ADP. The protein operates within amino-acid biosynthesis; L-arginine biosynthesis; N(2)-acetyl-L-ornithine from L-glutamate: step 2/4. Catalyzes the ATP-dependent phosphorylation of N-acetyl-L-glutamate. This chain is Acetylglutamate kinase, found in Novosphingobium aromaticivorans (strain ATCC 700278 / DSM 12444 / CCUG 56034 / CIP 105152 / NBRC 16084 / F199).